The primary structure comprises 210 residues: Probable septum site-determining protein MinC (210 aa).

This sequence belongs to the MinC family. Interacts with MinD and FtsZ.

Cell division inhibitor that blocks the formation of polar Z ring septums. Rapidly oscillates between the poles of the cell to destabilize FtsZ filaments that have formed before they mature into polar Z rings. Prevents FtsZ polymerization. This Thermotoga petrophila (strain ATCC BAA-488 / DSM 13995 / JCM 10881 / RKU-1) protein is Probable septum site-determining protein MinC.